Consider the following 617-residue polypeptide: Protein fem-1 homolog C (617 aa).

Methionine 1 carries the N-acetylmethionine modification. 7 ANK repeats span residues 2–31, 40–70, 82–111, 115–144, 148–177, 181–210, and 213–242; these read DLKTAVFNAARDGKLRLLTKLLASKSKEEV, NGATPLLMAARYGHLDMVEFLLEQCSASIEV, EGAPPLWAASAAGHLKVVQSLLNHGASVNN, TNSTPLRAACFDGHLEIVKYLVEHKADLEV, HGHTCLMISCYKGHKEIAQYLLEKGADVNR, KGNTALHDCAESGSLDIMKMLLMYCAKMEK, and YGMTPLLSASVTGHTNIVDFLTHHAQTSKT. TPR repeat units lie at residues 245 to 279 and 338 to 371; these read INALELLGATFVDKKRDLLGALKYWKKAMNMRYSD and SYYIRYRGAVYADSGNFKRCINLWKYALDMQQNN. ANK repeat units lie at residues 481–523 and 527–556; these read NNFS…DVNV and DDNSPLHIAALNNHPDIMNLLIKSGAHFDA.

The protein belongs to the fem-1 family. Component of a CRL2 E3 ubiquitin-protein ligase complex, also named ECS (Elongin BC-CUL2/5-SOCS-box protein) complex, composed of CUL2, Elongin BC (ELOB and ELOC), RBX1 and substrate-specific adapter FEM1C.

It participates in protein modification; protein ubiquitination. Functionally, substrate-recognition component of a Cul2-RING (CRL2) E3 ubiquitin-protein ligase complex of the DesCEND (destruction via C-end degrons) pathway, which recognizes a C-degron located at the extreme C terminus of target proteins, leading to their ubiquitination and degradation. The C-degron recognized by the DesCEND pathway is usually a motif of less than ten residues and can be present in full-length proteins, truncated proteins or proteolytically cleaved forms. The CRL2(FEM1C) complex specifically recognizes proteins with an arginine at the C-terminus: recognizes and binds proteins ending with -Lys/Arg-Xaa-Arg and -Lys/Arg-Xaa-Xaa-Arg C-degrons, such as SIL1 or OR51B2, leading to their ubiquitination and degradation. The CRL2(FEM1C) complex mediates ubiquitination and degradation of truncated MSRB1/SEPX1 selenoproteins produced by failed UGA/Sec decoding. This is Protein fem-1 homolog C from Bos taurus (Bovine).